A 705-amino-acid chain; its full sequence is SPbeta prophage-derived sublancin-168-processing and transport ATP-binding protein SunT (705 aa).

One can recognise a Peptidase C39 domain in the interval 12–138 (QFNSHDCGLA…SKFTNFILEI (127 aa)). Residue Cys18 is part of the active site. The next 6 helical transmembrane spans lie at 167–187 (IVFVILLTSLFVVGLAVAGSF), 205–225 (LITITLIFISMVLIRCIFDFV), 281–301 (ANFVTAIIDIILILGLGVILY), 306–326 (ILFLTIILPILLLSCLAILFF), 388–408 (VISNEILKGLIQNSFTIIILW), and 418–438 (SMSLGTLLFINTLAAFLLSSL). One can recognise an ABC transmembrane type-1 domain in the interval 168–450 (VFVILLTSLF…ILSMQSDLQQ (283 aa)). In terms of domain architecture, ABC transporter spans 483–705 (IKTVNLNIGA…SYSENKEYSI (223 aa)). 516–523 (GESGTGKS) is an ATP binding site.

The protein belongs to the ABC transporter superfamily. SunT family. In terms of assembly, homodimer.

The protein resides in the cell membrane. Its function is as follows. SunT (TC 3.A.1.112.4) is required for production of the lantibiotic sublancin-168, probably by both processing the signal peptide and exporting the resulting mature lantibiotic. This is SPbeta prophage-derived sublancin-168-processing and transport ATP-binding protein SunT (sunT) from Bacillus subtilis (strain 168).